A 206-amino-acid chain; its full sequence is MDLTVKTLEGKDAGKVSLSDAIFGLEPREDIIARVVRWQLAKRQQGTHKAKGRAEVARTGAKMYKQKGTGRARHHSARAPQFRGGGKAHGPVVRSHAHDLPKKVRALGLRHALSAKLKAEEIIVLDDLVANEAKTKALAGAFASLGLTNALIIGGAEIENNFKLAAQNIPNVDVLPVQGINVYDILRRGKLVLSKAAVEALEERFK.

The disordered stretch occupies residues 63-93 (MYKQKGTGRARHHSARAPQFRGGGKAHGPVV). Residues 64-77 (YKQKGTGRARHHSA) are compositionally biased toward basic residues.

The protein belongs to the universal ribosomal protein uL4 family. As to quaternary structure, part of the 50S ribosomal subunit.

Functionally, one of the primary rRNA binding proteins, this protein initially binds near the 5'-end of the 23S rRNA. It is important during the early stages of 50S assembly. It makes multiple contacts with different domains of the 23S rRNA in the assembled 50S subunit and ribosome. In terms of biological role, forms part of the polypeptide exit tunnel. The chain is Large ribosomal subunit protein uL4 from Sinorhizobium fredii (strain NBRC 101917 / NGR234).